Consider the following 106-residue polypeptide: Protein translocase subunit SecE (106 aa).

The next 2 membrane-spanning stretches (helical) occupy residues 20 to 40 (LPIR…LAAI) and 75 to 95 (IVIG…SIIV).

The protein belongs to the SecE/SEC61-gamma family. In terms of assembly, component of the Sec protein translocase complex. Heterotrimer consisting of SecY, SecE and SecG subunits. The heterotrimers can form oligomers, although 1 heterotrimer is thought to be able to translocate proteins. Interacts with the ribosome. Interacts with SecDF, and other proteins may be involved. Interacts with SecA.

The protein resides in the cell inner membrane. Functionally, essential subunit of the Sec protein translocation channel SecYEG. Clamps together the 2 halves of SecY. May contact the channel plug during translocation. This is Protein translocase subunit SecE from Haemophilus influenzae (strain ATCC 51907 / DSM 11121 / KW20 / Rd).